Consider the following 613-residue polypeptide: Glutaminase 1 (613 aa).

A glutaminase region spans residues G33 to L315. Substrate contacts are provided by S75, N124, E168, N175, Y199, Y251, and V269. One can recognise an STAS domain in the interval R345–D457. L480–L595 lines the a nucleoside 3',5'-cyclic phosphate pocket.

It belongs to the glutaminase family. In terms of assembly, homotetramer.

The catalysed reaction is L-glutamine + H2O = L-glutamate + NH4(+). This chain is Glutaminase 1 (glsA1), found in Bradyrhizobium diazoefficiens (strain JCM 10833 / BCRC 13528 / IAM 13628 / NBRC 14792 / USDA 110).